The chain runs to 898 residues: Neutral alpha-glucosidase C (898 aa).

Positions 154-173 are disordered; that stretch reads QRATKGNGQNTPAATSQENQ. The span at 157–171 shows a compositional bias: polar residues; it reads TKGNGQNTPAATSQE. Asp495 (nucleophile) is an active-site residue. Glu498 is a catalytic residue. Residue Asp571 is the Proton donor of the active site.

The protein belongs to the glycosyl hydrolase 31 family.

The catalysed reaction is Hydrolysis of terminal, non-reducing (1-&gt;4)-linked alpha-D-glucose residues with release of alpha-D-glucose.. Its function is as follows. Has alpha-glucosidase activity. This is Neutral alpha-glucosidase C (Ganc) from Mus musculus (Mouse).